A 552-amino-acid chain; its full sequence is N-acetylglucosamine-6-sulfatase (552 aa).

The first 36 residues, 1-36, serve as a signal peptide directing secretion; sequence MRLLPLAPGRLRRGSPRHLPSCSPALLLLVLGGCLG. Asp55, Asp56, and Cys91 together coordinate Ca(2+). The active-site Nucleophile is Cys91. Position 91 is a 3-oxoalanine (Cys) (Cys91). Residues Asn111, Asn117, Asn183, Asn198, Asn210, Asn279, and Asn317 are each glycosylated (N-linked (GlcNAc...) asparagine). Asp326 and Asn327 together coordinate Ca(2+). Residues Asn362, Asn387, Asn405, Asn422, Asn449, and Asn480 are each glycosylated (N-linked (GlcNAc...) asparagine). Ser541 carries the phosphoserine modification.

Belongs to the sulfatase family. Ca(2+) serves as cofactor. Post-translationally, the form A (78 kDa) is processed by internal peptidase cleavage to a 32 kDa N-terminal species (form B) and a 48 kDa C-terminal species. In terms of processing, the conversion to 3-oxoalanine (also known as C-formylglycine, FGly), of a serine or cysteine residue in prokaryotes and of a cysteine residue in eukaryotes, is critical for catalytic activity.

It localises to the lysosome. It carries out the reaction Hydrolysis of the 6-sulfate groups of the N-acetyl-D-glucosamine 6-sulfate units of heparan sulfate and keratan sulfate.. Hydrolyzes 6-sulfate groups in N-acetyl-d-glucosaminide units of heparin sulfate and keratan sulfate. The sequence is that of N-acetylglucosamine-6-sulfatase (GNS) from Homo sapiens (Human).